A 349-amino-acid chain; its full sequence is Inhibitor of nuclear factor kappa-B kinase-interacting protein (349 aa).

Over residues Met-1–Gly-11 the composition is skewed to basic residues. The disordered stretch occupies residues Met-1–Trp-39. Residues Pro-19–Glu-30 show a composition bias toward basic and acidic residues. A helical transmembrane segment spans residues Gly-45 to Val-61. A glycan (N-linked (GlcNAc...) asparagine) is linked at Asn-145. Coiled-coil stretches lie at residues Gly-183 to Leu-216 and Ile-304 to Asp-347. The N-linked (GlcNAc...) asparagine glycan is linked to Asn-327.

N-glycosylated.

The protein resides in the endoplasmic reticulum membrane. In terms of biological role, target of p53/TP53 with pro-apoptotic function. This chain is Inhibitor of nuclear factor kappa-B kinase-interacting protein (IKBIP), found in Bos taurus (Bovine).